Here is a 430-residue protein sequence, read N- to C-terminus: Aspartate aminotransferase, mitochondrial (430 aa).

A mitochondrion-targeting transit peptide spans 1 to 29 (MALLHSSRILSGMAAAFHPGLAAAASARA). Phosphothreonine is present on T48. K59 is subject to N6-acetyllysine. Residue G65 coordinates substrate. The residue at position 73 (K73) is an N6-acetyllysine; alternate. K73 is subject to N6-succinyllysine; alternate. K82 carries the N6-acetyllysine modification. Residue K90 is modified to N6-acetyllysine; alternate. At K90 the chain carries N6-succinyllysine; alternate. Y96 bears the 3'-nitrotyrosine; alternate mark. Y96 carries the phosphotyrosine; alternate modification. Residues K107 and K122 each carry the N6-acetyllysine; alternate modification. 2 positions are modified to N6-succinyllysine; alternate: K107 and K122. Position 143 is a phosphoserine (S143). K159 carries the N6-acetyllysine; alternate modification. An N6-succinyllysine; alternate modification is found at K159. A substrate-binding site is contributed by W162. K185 is subject to N6-acetyllysine; alternate. The residue at position 185 (K185) is an N6-succinyllysine; alternate. N215 contributes to the substrate binding site. K227 is subject to N6-succinyllysine. K234 carries the N6-acetyllysine modification. An N6-acetyllysine; alternate mark is found at K279 and K296. An N6-(pyridoxal phosphate)lysine; alternate modification is found at K279. K296 is subject to N6-succinyllysine; alternate. K302 is modified (N6-acetyllysine). An N6-acetyllysine; alternate modification is found at K309. Residue K309 is modified to N6-succinyllysine; alternate. R313 carries the asymmetric dimethylarginine modification. K338 carries the N6-acetyllysine; alternate modification. At K338 the chain carries N6-succinyllysine; alternate. K345 carries the post-translational modification N6-acetyllysine. The residue at position 363 (K363) is an N6-acetyllysine; alternate. K363 is modified (N6-succinyllysine; alternate). N6-acetyllysine occurs at positions 364 and 387. N6-acetyllysine; alternate is present on residues K396 and K404. An N6-succinyllysine; alternate mark is found at K396 and K404. R407 is a binding site for substrate.

It belongs to the class-I pyridoxal-phosphate-dependent aminotransferase family. As to quaternary structure, homodimer. Requires pyridoxal 5'-phosphate as cofactor. Acetylation of Lys-296, Lys-345 and Lys-363 is observed in liver mitochondria from fasted mice but not from fed mice. In terms of tissue distribution, detected in brain (at protein level).

The protein resides in the mitochondrion matrix. It localises to the cell membrane. It carries out the reaction L-aspartate + 2-oxoglutarate = oxaloacetate + L-glutamate. It catalyses the reaction L-kynurenine + 2-oxoglutarate = kynurenate + L-glutamate + H2O. Catalyzes the irreversible transamination of the L-tryptophan metabolite L-kynurenine to form kynurenic acid (KA). As a member of the malate-aspartate shuttle, it has a key role in the intracellular NAD(H) redox balance. Is important for metabolite exchange between mitochondria and cytosol, and for amino acid metabolism. Facilitates cellular uptake of long-chain free fatty acids. The chain is Aspartate aminotransferase, mitochondrial (Got2) from Mus musculus (Mouse).